The chain runs to 89 residues: Gallinacin-13 (89 aa).

An N-terminal signal peptide occupies residues 1–23 (MRILQLLFAIVVILLLQDAPARG). Disulfide bonds link Cys-30–Cys-58, Cys-37–Cys-51, and Cys-41–Cys-59. Positions 66 to 89 (PFSNPKHSVLHTAEQDPSPSLGGT) are disordered.

The protein belongs to the beta-defensin family. As to expression, expressed in the liver, gall bladder, kidney, small intestine, spleen, testis, ovary and male and female reproductive tracts. Not detected in the ovarian stroma and the theca and granulosa layers of the ovarian follicle.

Its subcellular location is the secreted. It localises to the cytoplasmic granule. Functionally, has bactericidal activity. Potent activity against E.coli, L.monocytogenes, S.typhimurium and S.pyogenes but mot against S.aureus. In terms of biological role, has bactericidal activity. This is Gallinacin-13 (GAL13) from Gallus gallus (Chicken).